We begin with the raw amino-acid sequence, 1338 residues long: Insulin receptor substrate 2 (1338 aa).

Over residues 1–12 (MASPPRHGPPGP) the composition is skewed to pro residues. 2 disordered regions span residues 1-31 (MASP…NHSV) and 49-72 (VLRG…QPPR). One can recognise a PH domain in the interval 16 to 144 (DGPNLNNNNN…WYRALTDLVS (129 aa)). Low complexity predominate over residues 19-28 (NLNNNNNNNN). The segment covering 53–66 (PGAGGDEATAGGGS) has biased composition (gly residues). The 105-residue stretch at 194 to 298 (YREVWQVNLK…EAMKALKELF (105 aa)) folds into the IRS-type PTB domain. Positions 303–411 (RSKSQSSGSS…SHTLSGGCGG (109 aa)) are disordered. Ser-306 and Ser-346 each carry phosphoserine. Thr-350 is subject to Phosphothreonine. 4 positions are modified to phosphoserine: Ser-365, Ser-384, Ser-388, and Ser-391. Arg-412 bears the Omega-N-methylarginine mark. Residues 428–537 (SRSMSMPVAH…PPARDGGGGG (110 aa)) are disordered. A compositionally biased stretch (low complexity) spans 444 to 453 (SPGSLSSSSG). Positions 459–471 (YPPPPGPHPPLPH) are enriched in pro residues. Residues 475-493 (HGPGQRPSSGSASASGSPS) are compositionally biased toward low complexity. A Phosphothreonine modification is found at Thr-520. Position 523 is a phosphoserine (Ser-523). At Thr-527 the chain carries Phosphothreonine. Tyr-540 bears the Phosphotyrosine; by INSR mark. Residues 540–543 (YGYM) carry the YXXM motif 1 motif. The residue at position 560 (Ser-560) is a Phosphoserine; by PLK1. Ser-577 carries the post-translational modification Phosphoserine. A phosphothreonine mark is found at Thr-579 and Thr-580. Ser-594 is modified (phosphoserine). The short motif at 598 to 601 (YTLM) is the YXXM motif 2 element. Ser-608 and Ser-620 each carry phosphoserine. 2 positions are modified to phosphotyrosine; by INSR: Tyr-653 and Tyr-675. 2 consecutive short sequence motifs (YXXM motif) follow at residues 653–656 (YMPM) and 675–678 (YMPM). Phosphoserine occurs at positions 679 and 682. Residues 703 to 719 (PSAGPAGPAPTSAAGRT) are compositionally biased toward low complexity. Positions 703–739 (PSAGPAGPAPTSAAGRTFPASGGGYKASSPAESSPED) are disordered. 2 positions are modified to phosphoserine: Ser-735 and Ser-736. A YXXM motif 5 motif is present at residues 742-745 (YMRM). Phosphoserine is present on Ser-770. Thr-779 carries the post-translational modification Phosphothreonine. Ser-805 is modified (phosphoserine). The short motif at 823–826 (YVLM) is the YXXM motif 6 element. Ser-828 carries the phosphoserine modification. The tract at residues 840–1101 (EPQATPGPSQ…KPEAARVASP (262 aa)) is disordered. The span at 859–870 (TQPPHPVVPSPV) shows a compositional bias: pro residues. Position 915 is a phosphoserine (Ser-915). Tyr-919 is modified (phosphotyrosine; by INSR). Residues 938–967 (LLASAASSSSLLSASSPASSLGSGTPGTSS) show a composition bias toward low complexity. Phosphoserine is present on Ser-973. Position 978 is a phosphotyrosine; by INSR (Tyr-978). A compositionally biased stretch (pro residues) spans 1013–1022 (PYPPLPPRPS). The YXXM motif 7 signature appears at 1072–1075 (YTEM). Residue Thr-1082 is modified to Phosphothreonine. The span at 1083 to 1093 (PPQPIAAPPKP) shows a compositional bias: pro residues. Residue Ser-1100 is modified to Phosphoserine. Ser-1109 is subject to Phosphoserine; by PLK1. The interval 1121 to 1296 (LQASQPPDPH…TRSLGGLISA (176 aa)) is disordered. Over residues 1150 to 1165 (ETFSSTTTVTPVSPSF) the composition is skewed to low complexity. Thr-1159 carries the post-translational modification Phosphothreonine. Phosphoserine occurs at positions 1162, 1174, 1176, and 1186. Residues 1174 to 1183 (SASVENVSLR) show a composition bias toward polar residues. Residues 1188–1198 (GGVGVGPGGGD) are compositionally biased toward gly residues. Residue Ser-1203 is modified to Phosphoserine. Over residues 1224-1236 (QPGGLVGCPGSGG) the composition is skewed to gly residues. Tyr-1253 is subject to Phosphotyrosine; by INSR. Residues 1263–1277 (GLPPQPQPPPPPLPQ) show a composition bias toward pro residues. Lys-1331 is covalently cross-linked (Glycyl lysine isopeptide (Lys-Gly) (interchain with G-Cter in ubiquitin)).

As to quaternary structure, interacts with PHIP. Interacts with SH2B1; this interaction enhances leptin-induced activation of the PI3-kinase pathway. Interacts with GRB2. Interacts with PIK3R1. Interacts with DVL2; this interaction promotes the Wnt/beta-catenin signaling pathway. Post-translationally, phosphorylation fluctuates in a cell-cycle dependent manner with hyperphosphorylation during mitosis. Phosphorylated at Ser-560 and Ser-1109 by PLK1; these phosphorylations prevent the activation of the PI3K pathway upon growth factor stimulation by inhibiting the binding between IRS2 and the PI3K pathway components and increasing the level of IRS2 protein degradation. In addition, they prevent premature mitotic exit. In terms of processing, monoubiquitinated by NEDD4; leading to enhanced IGF1 signaling. During cell cycle, ubiquitination and proteasomal degradation are controlled by FZR1.

It localises to the cytoplasm. Its subcellular location is the cytosol. Functionally, signaling adapter protein that participates in the signal transduction from two prominent receptor tyrosine kinases, insulin receptor/INSR and insulin-like growth factor I receptor/IGF1R. Plays therefore an important role in development, growth, glucose homeostasis as well as lipid metabolism. Upon phosphorylation by the insulin receptor, functions as a signaling scaffold that propagates insulin action through binding to SH2 domain-containing proteins including the p85 regulatory subunit of PI3K, NCK1, NCK2, GRB2 or SHP2. Recruitment of GRB2 leads to the activation of the guanine nucleotide exchange factor SOS1 which in turn triggers the Ras/Raf/MEK/MAPK signaling cascade. Activation of the PI3K/AKT pathway is responsible for most of insulin metabolic effects in the cell, and the Ras/Raf/MEK/MAPK is involved in the regulation of gene expression and in cooperation with the PI3K pathway regulates cell growth and differentiation. Acts a positive regulator of the Wnt/beta-catenin signaling pathway through suppression of DVL2 autophagy-mediated degradation leading to cell proliferation. Plays a role in cell cycle progression by promoting a robust spindle assembly checkpoint (SAC) during M-phase. In macrophages, IL4-induced tyrosine phosphorylation of IRS2 leads to the recruitment and activation of phosphoinositide 3-kinase (PI3K). This is Insulin receptor substrate 2 (IRS2) from Homo sapiens (Human).